Reading from the N-terminus, the 195-residue chain is Imidazoleglycerol-phosphate dehydratase (195 aa).

This sequence belongs to the imidazoleglycerol-phosphate dehydratase family.

It is found in the cytoplasm. The enzyme catalyses D-erythro-1-(imidazol-4-yl)glycerol 3-phosphate = 3-(imidazol-4-yl)-2-oxopropyl phosphate + H2O. It functions in the pathway amino-acid biosynthesis; L-histidine biosynthesis; L-histidine from 5-phospho-alpha-D-ribose 1-diphosphate: step 6/9. The sequence is that of Imidazoleglycerol-phosphate dehydratase from Burkholderia ambifaria (strain MC40-6).